We begin with the raw amino-acid sequence, 341 residues long: Follistatin (341 aa).

An N-terminal signal peptide occupies residues 1 to 29 (MLNERIQPGMIFLLTVSLCHFMEYRAVQA). The TB domain occupies 30-103 (GNCWLQQSKN…TCENVDCGPG (74 aa)). 8 cysteine pairs are disulfide-bonded: Cys32–Cys55, Cys42–Cys88, Cys56–Cys91, Cys95–Cys106, Cys100–Cys116, Cys118–Cys150, Cys122–Cys143, and Cys132–Cys164. Asn72 carries N-linked (GlcNAc...) asparagine glycosylation. Positions 94–117 (TCENVDCGPGKKCKMNKKNKPRCV) constitute a Follistatin-like 1 domain. 3 Kazal-like domains span residues 100–166 (CGPG…KCKK), 186–241 (NAYC…KCIK), and 264–318 (RGRC…SCNS). Asn124 carries an N-linked (GlcNAc...) asparagine glycan. The Follistatin-like 2 domain maps to 167 to 190 (TCRDVLCPGSSSCVVDQTNNAYCV). 3 disulfide bridges follow: Cys192–Cys225, Cys196–Cys218, and Cys207–Cys239. Residues 244–268 (SCEDIQCSAGKKCLWDSRVGRGRCA) form the Follistatin-like 3 domain. Intrachain disulfides connect Cys270–Cys302, Cys274–Cys295, and Cys284–Cys316. N-linked (GlcNAc...) asparagine glycosylation occurs at Asn288. Over residues 321 to 333 (EDTEEEEEEEEPD) the composition is skewed to acidic residues. Residues 321-341 (EDTEEEEEEEEPDYSFVISSW) are disordered.

As to quaternary structure, monomer. In terms of tissue distribution, spemann organizer and notochord.

The protein localises to the secreted. Its function is as follows. Binds directly to activin and functions as an activin antagonist which plays a role in neural induction. The short isoform is a more potent inhibitor of activin than the long isoform. Specific inhibitor of the biosynthesis and secretion of pituitary follicle stimulating hormone (FSH). The chain is Follistatin (fst) from Xenopus laevis (African clawed frog).